The chain runs to 405 residues: Aspartokinase (405 aa).

2 consecutive ACT domains span residues 267–344 and 345–405; these read VSME…AKVS and IVGV…QLDQ.

Belongs to the aspartokinase family.

It catalyses the reaction L-aspartate + ATP = 4-phospho-L-aspartate + ADP. It functions in the pathway amino-acid biosynthesis; L-lysine biosynthesis via DAP pathway; (S)-tetrahydrodipicolinate from L-aspartate: step 1/4. Its pathway is amino-acid biosynthesis; L-methionine biosynthesis via de novo pathway; L-homoserine from L-aspartate: step 1/3. It participates in amino-acid biosynthesis; L-threonine biosynthesis; L-threonine from L-aspartate: step 1/5. This chain is Aspartokinase (lysC), found in Helicobacter pylori (strain ATCC 700392 / 26695) (Campylobacter pylori).